The following is a 352-amino-acid chain: Selenide, water dikinase (352 aa).

C23 is a catalytic residue. Residues K26 and 54-56 (SRD) contribute to the ATP site. Residue D57 participates in Mg(2+) binding. ATP is bound by residues D74, D97, and 145-147 (GHS). D97 contacts Mg(2+). D233 contacts Mg(2+).

It belongs to the selenophosphate synthase 1 family. Class I subfamily. In terms of assembly, homodimer. Mg(2+) is required as a cofactor.

The enzyme catalyses hydrogenselenide + ATP + H2O = selenophosphate + AMP + phosphate + 2 H(+). In terms of biological role, synthesizes selenophosphate from selenide and ATP. The sequence is that of Selenide, water dikinase from Shewanella sp. (strain ANA-3).